Consider the following 457-residue polypeptide: MPPAALQATVSESVKDAIISKLRQPPSAVPSREWSAETRTSLTPADAGIAEARASAEDIELVDLQHHNFSEPRKRIVSPASLSRFEHSQAFAEILAFICVCNTRVVGKTLTEEIQISSACRTILEMLDQVAALRESTPPDASIGSSRFGNPAFRTFYAKIRENTDRLHRMIPGLETDSEWSRAARAELSVYFQECWGNEKRIDYGSGMELNMACWLLCLCKLRILRLPEDGACIVLRIFWTYVQVMRDIQSSYWLEPAGSHGVWGLDDYHFLPFLWGAGQLSSHRHLRPKAIHDAEIVDEFAPKYMYLACIQFINSVKTASLRWHSPMLDDISGAKSWSKVNQGMIKMYRAEVLKKLPIAQHIFFGSLLRFPEPATGELEEEDVEEDAHGHIHPAGKPHAHGTGEGQAAGWGDCCGIPIPSAFAAAEQEKKRQQGNFSSTMLGEKPFGTGVRRIPFD.

Disordered stretches follow at residues 387–407 (DAHG…GEGQ) and 426–457 (AEQE…IPFD). The span at 391-400 (HIHPAGKPHA) shows a compositional bias: basic residues.

The protein belongs to the PTPA-type PPIase family.

The protein resides in the cytoplasm. The enzyme catalyses [protein]-peptidylproline (omega=180) = [protein]-peptidylproline (omega=0). In terms of biological role, PPIases accelerate the folding of proteins. It catalyzes the cis-trans isomerization of proline imidic peptide bonds in oligopeptides. Acts as a regulatory subunit for PP2A-like phosphatases modulating their activity or substrate specificity, probably by inducing a conformational change in the catalytic subunit, a direct target of the PPIase. Can reactivate inactive phosphatase PP2A-phosphatase methylesterase complexes (PP2Ai) in presence of ATP and Mg(2+) by dissociating the inactive form from the complex. The chain is Serine/threonine-protein phosphatase 2A activator 2 (RRD2) from Mycosarcoma maydis (Corn smut fungus).